Consider the following 823-residue polypeptide: MRRLQQSLRRRSARRCPFILIPHRLLTTSYASYKPAPQATLEIEDTNSPTFLLKTSPIQLPARATSDDSAIKAHFDLPHSIFGDMVGVRREHVKGLFHYDSLTQPESLMRLTDRTLIQASAIVQRIVVAPQDPTGRELRLVVKNLDRLSDILCGVIDMCELIRNVHPHQDWVNQSDRTHQILCSFMNELNATRGLYESLAKAIAHPFNDPLTTSELRVARIFLTDFERSGIHLPPSVRERFVKHSDALLFLGRSFLSSASSGPSTVPHIEIPDPHRLLTGLGRQFVDSLPRTGRNGQAVIEPGSWEAQMILRYAREGRARELVYVGGMRADKKRISVLEAMLKERAELASVLGKNNWAEVVLVDKMTKTPENVMRFLTSLAQHHQPVARAEVDMLRRMKATALTGNYFDPRNSRTRHLPLFHAWDRDYYSDKYLTSLIPTGSPPSISPYLSTGTVMSGLSRIFSRLYGISFKPAVVSPGEVWHPSVRRLDVVHEEEGLIGVIYCDFFSRIGKSSGAAHYTVRCSRRVDDDDIDGDGLPEDWDKPYGPGLEADKESLSGKPGKYQLPIIALSMDVGTVNEGRPALLNWQELETLFHEMGHAIHSMIGRTEYHNVSGTRCATDFVELPSILMEHFVSSPEVLSTLAFHHATGEPLPIPVIEAHLALNQSLSALETHGQIAMALLDQKYHTLRHGQDSFDSTAIWFQLQQEIGVIQPVPGTAWQMQFGHLYGYGATYYSYLFDRAIAGKIWSTLFHRSGTSQAYDRKAEGILSREGGELLKEKVLKWGGGRDPWEMVGDVIGGVEGDELSKGDERALALVGSWSVV.

The N-terminal 33 residues, 1–33 (MRRLQQSLRRRSARRCPFILIPHRLLTTSYASY), are a transit peptide targeting the mitochondrion. Residues 532-553 (IDGDGLPEDWDKPYGPGLEADK) are disordered. Histidine 595 serves as a coordination point for Zn(2+). The active site involves glutamate 596. The Zn(2+) site is built by histidine 599 and histidine 602.

Belongs to the peptidase M3 family. Zn(2+) serves as cofactor.

The protein resides in the mitochondrion matrix. It catalyses the reaction Release of an N-terminal octapeptide as second stage of processing of some proteins imported into the mitochondrion.. Its function is as follows. Cleaves proteins, imported into the mitochondrion, to their mature size. While most mitochondrial precursor proteins are processed to the mature form in one step by mitochondrial processing peptidase (MPP), the sequential cleavage by MIP of an octapeptide after initial processing by MPP is a required step for a subgroup of nuclear-encoded precursor proteins destined for the matrix or the inner membrane. This is Mitochondrial intermediate peptidase 2 (OCT2) from Cryptococcus neoformans var. neoformans serotype D (strain B-3501A) (Filobasidiella neoformans).